Reading from the N-terminus, the 264-residue chain is uncharacterized protein (264 aa).

The tract at residues 235-264 (ESSDEEDNDDDIINNDTNNDINNDDIEIKT) is disordered. Residues 237-247 (SDEEDNDDDII) are compositionally biased toward acidic residues.

This is an uncharacterized protein from Acanthamoeba polyphaga mimivirus (APMV).